Consider the following 324-residue polypeptide: Annexin A10 (324 aa).

4 Annexin repeats span residues 17–88 (FNPI…GLMY), 89–160 (PPPL…NLVQ), 171–243 (AMAA…AIVL), and 247–318 (DKPA…AICA).

It belongs to the annexin family.

This chain is Annexin A10 (ANXA10), found in Homo sapiens (Human).